The sequence spans 204 residues: Nucleoside triphosphate pyrophosphatase (204 aa).

The active-site Proton acceptor is aspartate 78.

It belongs to the Maf family. A divalent metal cation serves as cofactor.

The protein localises to the cytoplasm. It carries out the reaction a ribonucleoside 5'-triphosphate + H2O = a ribonucleoside 5'-phosphate + diphosphate + H(+). The enzyme catalyses a 2'-deoxyribonucleoside 5'-triphosphate + H2O = a 2'-deoxyribonucleoside 5'-phosphate + diphosphate + H(+). Its function is as follows. Nucleoside triphosphate pyrophosphatase. May have a dual role in cell division arrest and in preventing the incorporation of modified nucleotides into cellular nucleic acids. The chain is Nucleoside triphosphate pyrophosphatase from Prochlorococcus marinus (strain MIT 9215).